Reading from the N-terminus, the 332-residue chain is NADH-quinone oxidoreductase subunit H (332 aa).

Helical transmembrane passes span 16–36, 87–107, 116–136, 164–184, 190–210, 231–251, 253–273, 277–297, and 312–332; these read VFFG…TYAI, YVLA…ALPF, IGVG…GVVT, LVMS…VDIV, VWFI…AVAE, VEYS…YLFA, AALI…LGWI, VWFA…RATF, and VLLP…SLFF.

Belongs to the complex I subunit 1 family. As to quaternary structure, NDH-1 is composed of 14 different subunits. Subunits NuoA, H, J, K, L, M, N constitute the membrane sector of the complex.

It localises to the cell membrane. The enzyme catalyses a quinone + NADH + 5 H(+)(in) = a quinol + NAD(+) + 4 H(+)(out). Functionally, NDH-1 shuttles electrons from NADH, via FMN and iron-sulfur (Fe-S) centers, to quinones in the respiratory chain. The immediate electron acceptor for the enzyme in this species is believed to be ubiquinone. Couples the redox reaction to proton translocation (for every two electrons transferred, four hydrogen ions are translocated across the cytoplasmic membrane), and thus conserves the redox energy in a proton gradient. This subunit may bind ubiquinone. This Geobacillus thermodenitrificans (strain NG80-2) protein is NADH-quinone oxidoreductase subunit H.